A 129-amino-acid polypeptide reads, in one-letter code: Tumor necrosis factor receptor superfamily member 12A (129 aa).

A signal peptide spans 1 to 27 (MARGSLRRLLRLLVLGLWLALLRSVAG). At 28 to 80 (EQAPGTAPCSRGSSWSADLDKCMDCASCRARPHSDFCLGCAAAPPAPFRLLWP) the chain is on the extracellular side. 3 cysteine pairs are disulfide-bonded: cysteine 36–cysteine 49, cysteine 52–cysteine 67, and cysteine 55–cysteine 64. Residues 36–67 (CSRGSSWSADLDKCMDCASCRARPHSDFCLGC) form a TNFR-Cys; atypical repeat. A helical membrane pass occupies residues 81-101 (ILGGALSLTFVLGLLSGFLVW). At 102–129 (RRCRRREKFTTPIEETGGEGCPAVALIQ) the chain is on the cytoplasmic side.

In terms of assembly, associates with TRAF1 and TRAF2, and probably also with TRAF3. Highly expressed in heart, placenta and kidney. Intermediate expression in lung, skeletal muscle and pancreas.

It localises to the membrane. Receptor for TNFSF12/TWEAK. Weak inducer of apoptosis in some cell types. Promotes angiogenesis and the proliferation of endothelial cells. May modulate cellular adhesion to matrix proteins. This chain is Tumor necrosis factor receptor superfamily member 12A (TNFRSF12A), found in Homo sapiens (Human).